A 259-amino-acid chain; its full sequence is Haloacid dehalogenase-like hydrolase domain-containing protein 2 (259 aa).

Mg(2+) is bound by residues Asp13 and Ser15. Residues 13 to 15 (DLS) and 46 to 47 (TN) each bind substrate. Positions 47 to 71 (NTTKESKQDLLERLKKLEFDISEDE) form a coiled coil. The residue at position 50 (Lys50) is an N6-succinyllysine. Substrate is bound at residue Lys179. Asp204 contributes to the Mg(2+) binding site.

This sequence belongs to the HAD-like hydrolase superfamily. Mg(2+) serves as cofactor.

The polypeptide is Haloacid dehalogenase-like hydrolase domain-containing protein 2 (HDHD2) (Bos taurus (Bovine)).